We begin with the raw amino-acid sequence, 435 residues long: GTPase Der (435 aa).

EngA-type G domains lie at 3–168 (PTVA…PEDD) and 176–351 (VKLT…QNRR). Residues 9-16 (GRPNVGKS), 56-60 (DTGGY), 120-123 (NKVD), 182-189 (GRPNVGKS), 229-233 (DTAGL), and 294-297 (NKWD) each bind GTP. Positions 352–435 (MKIDTSRLNN…TPIELKFRRK (84 aa)) constitute a KH-like domain.

This sequence belongs to the TRAFAC class TrmE-Era-EngA-EngB-Septin-like GTPase superfamily. EngA (Der) GTPase family. Associates with the 50S ribosomal subunit.

GTPase that plays an essential role in the late steps of ribosome biogenesis. The protein is GTPase Der of Chloroherpeton thalassium (strain ATCC 35110 / GB-78).